We begin with the raw amino-acid sequence, 328 residues long: Beta-ketoacyl-[acyl-carrier-protein] synthase III (328 aa).

Active-site residues include Cys122 and His255. The segment at 256 to 260 is ACP-binding; sequence QANVR. Asn285 is a catalytic residue.

This sequence belongs to the thiolase-like superfamily. FabH family. As to quaternary structure, homodimer.

The protein localises to the cytoplasm. The enzyme catalyses malonyl-[ACP] + acetyl-CoA + H(+) = 3-oxobutanoyl-[ACP] + CO2 + CoA. Its pathway is lipid metabolism; fatty acid biosynthesis. Catalyzes the condensation reaction of fatty acid synthesis by the addition to an acyl acceptor of two carbons from malonyl-ACP. Catalyzes the first condensation reaction which initiates fatty acid synthesis and may therefore play a role in governing the total rate of fatty acid production. Possesses both acetoacetyl-ACP synthase and acetyl transacylase activities. Its substrate specificity determines the biosynthesis of branched-chain and/or straight-chain of fatty acids. This chain is Beta-ketoacyl-[acyl-carrier-protein] synthase III, found in Bordetella avium (strain 197N).